A 539-amino-acid chain; its full sequence is Phosphatidylinositol 4-phosphate 5-kinase type-1 beta (539 aa).

The segment at 1-21 (MSSTAENGDAVPGKQNEEKTY) is disordered. The PIPK domain maps to 25–395 (ASSAIKGAIQ…RFLKFMNSRV (371 aa)). Phosphoserine is present on residues Ser445, Ser447, and Ser448.

As to quaternary structure, interacts with RAC1, AJUBA, PLD1, PLD2 and ARF1. In terms of tissue distribution, highly expressed in brain and testis. Barely detectable in liver and skeletal muscle.

It is found in the cytoplasm. Its subcellular location is the cytosol. The protein localises to the cell membrane. It localises to the endomembrane system. It catalyses the reaction a 1,2-diacyl-sn-glycero-3-phospho-(1D-myo-inositol 4-phosphate) + ATP = a 1,2-diacyl-sn-glycero-3-phospho-(1D-myo-inositol-4,5-bisphosphate) + ADP + H(+). The catalysed reaction is 1-octadecanoyl-2-(5Z,8Z,11Z,14Z)-eicosatetraenoyl-sn-glycero-3-phospho-1D-myo-inositol 4-phosphate + ATP = 1-octadecanoyl-2-(5Z,8Z,11Z,14Z)-eicosatetraenoyl-sn-glycero-3-phospho-1D-myo-inositol 4,5-bisphosphate + ADP + H(+). The enzyme catalyses 1-octadecanoyl-2-(9Z)-octadecenoyl-sn-glycero-3-phospho-1D-myo-inositol 4-phosphate + ATP = 1-octadecanoyl-2-(9Z)-octadecenoyl-sn-glycero-3-phospho-1D-myo-inositol 4,5-bisphosphate + ADP + H(+). It carries out the reaction 1-octadecanoyl-2-(9Z)-octadecenoyl-sn-glycero-3-phospho-1D-myo-inositol + ATP = 1-octadecanoyl-2-(9Z)-octadecenoyl-sn-glycero-3-phospho-1D-myo-inositol 5-phosphate + ADP + H(+). It catalyses the reaction 1-octadecanoyl-2-(9Z,12Z)-octadecadienoyl-sn-glycero-3-phospho-1D-myo-inositol + ATP = 1-octadecanoyl-2-(9Z,12Z)-octadecadienoyl-sn-glycero-3-phospho-1D-myo-inositol 5-phosphate + ADP + H(+). The catalysed reaction is 1-octadecanoyl-2-(5Z,8Z,11Z,14Z-eicosatetraenoyl)-sn-glycero-3-phospho-(1D-myo-inositol) + ATP = 1-octadecanoyl-2-(5Z,8Z,11Z,14Z)-eicosatetraenoyl-sn-glycero-3-phospho-1D-myo-inositol 5-phosphate + ADP + H(+). The enzyme catalyses 1,2-di-(9Z,12Z)-octadecadienoyl-sn-glycero-3-phospho-1D-myo-inositol + ATP = 1,2-di(9Z,12Z)-octadecadienoyl-sn-glycero-3-phospho-1D-myo-inositol 5-phosphate + ADP + H(+). With respect to regulation, activated by phosphatidic acid. Functionally, catalyzes the phosphorylation of phosphatidylinositol 4-phosphate (PtdIns(4)P/PI4P) to form phosphatidylinositol 4,5-bisphosphate (PtdIns(4,5)P2/PIP2), a lipid second messenger that regulates several cellular processes such as signal transduction, vesicle trafficking, actin cytoskeleton dynamics, cell adhesion, and cell motility. PtdIns(4,5)P2 can directly act as a second messenger or can be utilized as a precursor to generate other second messengers: inositol 1,4,5-trisphosphate (IP3), diacylglycerol (DAG) or phosphatidylinositol-3,4,5-trisphosphate (PtdIns(3,4,5)P3/PIP3). Mediates RAC1-dependent reorganization of actin filaments. Contributes to the activation of phospholipase PLD2. Together with PIP5K1A, is required, after stimulation by G-protein coupled receptors, for the synthesis of IP3 that will induce stable platelet adhesion. This Mus musculus (Mouse) protein is Phosphatidylinositol 4-phosphate 5-kinase type-1 beta.